The sequence spans 345 residues: MKQLKRKRKSNFSVQETQTLLKEITKRKEVIFSKQLNTTINVMKRMAWEEIAQCVNAVGEGEQRTGTEVKRRYLDWRALMKRKRMKANMKLVGSGFPLPTSDLDDSLTEDIDEKIAFRNDANFEWQNVADFRDAGGSLTEVKVEEEERDPQSPEFEIEEEEEMLSSVIPDSRRENELPDFPHIDEFFTLNSTPSRPTYDEPHLLMNIEKQKLELEKRRLDIEAERLQVEKERLQIEKERLRHLDLEHERLQLEKERLQIEREKWRLQLVSTEKPALENELGQGEKSMLQPQDIEAEKLKLERERLQLEKDRLQFLKFESEKLQIEKERLQVEKERLRIQKEGHLP.

Positions 4 to 77 constitute a Myb-like domain; it reads LKRKRKSNFS…EVKRRYLDWR (74 aa). Residue Lys9 forms a Glycyl lysine isopeptide (Lys-Gly) (interchain with G-Cter in SUMO2) linkage. Position 106 is a phosphoserine (Ser106). Glycyl lysine isopeptide (Lys-Gly) (interchain with G-Cter in SUMO2) cross-links involve residues Lys114 and Lys142. The interval 139-175 is disordered; it reads TEVKVEEEERDPQSPEFEIEEEEEMLSSVIPDSRREN. Residue Thr188 is modified to Phosphothreonine. The stretch at 202-344 forms a coiled coil; the sequence is HLLMNIEKQK…RLRIQKEGHL (143 aa). Glycyl lysine isopeptide (Lys-Gly) (interchain with G-Cter in SUMO2) cross-links involve residues Lys237, Lys254, and Lys273.

This is Myb/SANT-like DNA-binding domain-containing protein 4 (Msantd4) from Mus musculus (Mouse).